A 780-amino-acid chain; its full sequence is Ino eighty subunit 1 (780 aa).

Disordered regions lie at residues 1–25 and 563–780; these read MADV…QQIH and ANGP…PGWN. Over residues 563 to 584 the composition is skewed to basic and acidic residues; it reads ANGPRRDRKKEREERQKAREEA. Basic residues predominate over residues 600–613; sequence SRARAQRNAKRKLA. Low complexity predominate over residues 614–635; sequence RAAAAASSTPSASTPKTAAARS. Acidic residues-rich tracts occupy residues 676 to 686 and 723 to 751; these read LEGEESLDDID and DADD…EGDD.

As to quaternary structure, component of the chromatin-remodeling INO80 complex.

Its subcellular location is the nucleus. Probably involved in transcription regulation via its interaction with the INO80 complex, a chromatin-remodeling complex. This Emericella nidulans (strain FGSC A4 / ATCC 38163 / CBS 112.46 / NRRL 194 / M139) (Aspergillus nidulans) protein is Ino eighty subunit 1.